A 133-amino-acid chain; its full sequence is TETPVTGEQGSATPGNVSNATVTAGKPSATSPGVMTIKNTTAVVQKETGVPESYHQDFSHAEITGIIFAVMAGLLLIIFLIAYLIRRMIKKPLPVPKPQDSPDIGTENTADPSELQDTEDPPLTSVEIETPAS.

O-linked (GalNAc...) threonine glycosylation is found at Thr1 and Thr6. Positions 1 to 34 (TETPVTGEQGSATPGNVSNATVTAGKPSATSPGV) are disordered. The Extracellular segment spans residues 1–62 (TETPVTGEQG…SYHQDFSHAE (62 aa)). A glycan (O-linked (GalNAc...) serine) is linked at Ser11. A glycan (O-linked (GalNAc...) threonine) is linked at Thr13. N-linked (GlcNAc...) asparagine glycosylation is present at Asn19. Residues Thr21, Thr23, and Thr30 are each glycosylated (O-linked (GalNAc...) threonine). Ser31 is a glycosylation site (O-linked (GalNAc...) serine). An N-linked (GlcNAc...) asparagine glycan is attached at Asn39. O-linked (GalNAc...) threonine glycosylation is found at Thr41 and Thr48. A helical membrane pass occupies residues 63–85 (ITGIIFAVMAGLLLIIFLIAYLI). At 86–133 (RRMIKKPLPVPKPQDSPDIGTENTADPSELQDTEDPPLTSVEIETPAS) the chain is on the cytoplasmic side. The disordered stretch occupies residues 93–133 (LPVPKPQDSPDIGTENTADPSELQDTEDPPLTSVEIETPAS).

Belongs to the glycophorin-A family. Homodimer. Component of the ankyrin-1 complex in the erythrocyte, composed of ANK1, RHCE, RHAG, SLC4A1, EPB42, GYPA, GYPB and AQP1. Interacts with SLC4A1; a GYPA monomer is bound at each end of the SLC4A1 dimer forming a heterotetramer.

Its subcellular location is the membrane. Functionally, component of the ankyrin-1 complex, a multiprotein complex involved in the stability and shape of the erythrocyte membrane. Glycophorin A is the major intrinsic membrane protein of the erythrocyte. The N-terminal glycosylated segment, which lies outside the erythrocyte membrane, has MN blood group receptors. Appears to be important for the function of SLC4A1 and is required for high activity of SLC4A1. May be involved in translocation of SLC4A1 to the plasma membrane. In Sus scrofa (Pig), this protein is Glycophorin-A.